A 154-amino-acid chain; its full sequence is Transcriptional repressor NrdR (154 aa).

A zinc finger lies at 3–34; sequence CPFCRHPDSRVIDSRETDEGQAIRRRRSCPEC. The ATP-cone domain maps to 46-136; it reads LAVVKRSGVT…VYRSFESADD (91 aa).

It belongs to the NrdR family. Zn(2+) is required as a cofactor.

Negatively regulates transcription of bacterial ribonucleotide reductase nrd genes and operons by binding to NrdR-boxes. This Mycobacterium avium (strain 104) protein is Transcriptional repressor NrdR.